The sequence spans 250 residues: 5-oxoprolinase subunit A (250 aa).

The protein belongs to the LamB/PxpA family. Forms a complex composed of PxpA, PxpB and PxpC.

It carries out the reaction 5-oxo-L-proline + ATP + 2 H2O = L-glutamate + ADP + phosphate + H(+). Its function is as follows. Catalyzes the cleavage of 5-oxoproline to form L-glutamate coupled to the hydrolysis of ATP to ADP and inorganic phosphate. The chain is 5-oxoprolinase subunit A from Pseudomonas fluorescens (strain ATCC BAA-477 / NRRL B-23932 / Pf-5).